Here is a 183-residue protein sequence, read N- to C-terminus: Oleosin-B2 (183 aa).

The tract at residues 1–23 (QASIFSRFFRMFSFIFPFVNVIK) is polar. Helical transmembrane passes span 24-44 (LIIA…ALGG), 46-66 (AVAL…LVPA), and 72-92 (LLAS…GLIM). Positions 24–95 (LIIASVTSLV…TGIGLIMGLV (72 aa)) are hydrophobic.

Belongs to the oleosin family. As to expression, the full-length protein is found in the tapetal lipid bodies of immature anthers, the proteolytically cleaved C-terminal product is found on the coats of pollen grains. Not present in seeds.

It is found in the lipid droplet. The protein resides in the membrane. In terms of biological role, many of the major pollen coat proteins are derived from endoproteolytic cleavage of oleosin-like proteins. The protein is Oleosin-B2 (OlnB2) of Brassica napus (Rape).